We begin with the raw amino-acid sequence, 250 residues long: NAD-dependent protein deacetylase 2 (250 aa).

A Deacetylase sirtuin-type domain is found at 4–250 (MDSKNLFKKA…LRNIWNLIKS (247 aa)). Ala29, Thr33, Phe40, Arg41, Gln107, Ile109, Asp110, and His125 together coordinate NAD(+). Nicotinamide is bound at residue Phe40. Nicotinamide-binding residues include Ile109 and Asp110. His125 (proton acceptor) is an active-site residue. The Zn(2+) site is built by Cys133, Cys136, Cys158, and Cys161. 3 residues coordinate NAD(+): Ser198, Ser199, and Asn219.

It belongs to the sirtuin family. Class U subfamily. It depends on Zn(2+) as a cofactor.

The protein resides in the cytoplasm. The enzyme catalyses N(6)-acetyl-L-lysyl-[protein] + NAD(+) + H2O = 2''-O-acetyl-ADP-D-ribose + nicotinamide + L-lysyl-[protein]. In terms of biological role, NAD-dependent protein deacetylase which modulates the activities of several enzymes which are inactive in their acetylated form. The chain is NAD-dependent protein deacetylase 2 from Caldanaerobacter subterraneus subsp. tengcongensis (strain DSM 15242 / JCM 11007 / NBRC 100824 / MB4) (Thermoanaerobacter tengcongensis).